A 255-amino-acid polypeptide reads, in one-letter code: PABIR family member 2 (255 aa).

The tract at residues 1–24 is disordered; the sequence is MAQEKMDLDFEADTSEGATLRRSN. Position 2 is an N-acetylalanine (alanine 2). A phosphoserine mark is found at serine 25, serine 33, serine 50, and serine 58. Phosphothreonine is present on threonine 112. A phosphoserine mark is found at serine 115 and serine 119. Arginine 122 carries the post-translational modification Omega-N-methylarginine. At serine 145 the chain carries Phosphoserine. 2 disordered regions span residues 169 to 196 and 219 to 238; these read LGPL…SMLS and SGLS…SPVA. Residues 174-184 show a composition bias toward basic and acidic residues; sequence RKGEMEMESQP.

The protein belongs to the FAM122 family.

The chain is PABIR family member 2 from Mus musculus (Mouse).